Consider the following 441-residue polypeptide: Endothelin receptor type B (441 aa).

A signal peptide spans 1-26 (MQPLPSLCGRALVALILACGVAGIQA). Over 27–100 (EEREFPPAGA…GPIEIKETFK (74 aa)) the chain is Extracellular. The interval 30-87 (EFPPAGATQPLPGTGEMMETPTETSWPGRSNASDPRSSATPQIPRGGRMAGIPPRTPP) is disordered. Low complexity predominate over residues 41-53 (PGTGEMMETPTET). The segment covering 54–70 (SWPGRSNASDPRSSATP) has biased composition (polar residues). Residues 101-125 (YINTVVSCLVFVLGIIGNSTLLRII) traverse the membrane as a helical segment. At 126–136 (YKNKCMRNGPN) the chain is on the cytoplasmic side. Residues 137-162 (ILIASLALGDLLHIIIDIPINTYKLL) form a helical membrane-spanning segment. The Extracellular segment spans residues 163–174 (AKDWPFGVEMCK). C173 and C254 form a disulfide bridge. A helical membrane pass occupies residues 175 to 196 (LVPFIQKASVGITVLSLCALSI). Residues 197 to 217 (DRYRAVASWSRIKGIGVPKWT) are Cytoplasmic-facing. Residues 218–242 (AVEIVLIWVVSVVLAVPEAVGFDII) traverse the membrane as a helical segment. Topologically, residues 243 to 270 (TSDHIGNKLRICLLHPTQKTAFMQFYKT) are extracellular. The chain crosses the membrane as a helical span at residues 271 to 295 (AKDWWLFSFYFCLPLAITALFYTLM). Residues 296–323 (TCEMLRKKSGMQIALNDHLKQRREVAKT) lie on the Cytoplasmic side of the membrane. S304 bears the Phosphoserine mark. A helical membrane pass occupies residues 324–349 (VFCLVLVFALCWLPLHLSRILKLTLY). Topologically, residues 350 to 361 (DQHDPRRCEFLS) are extracellular. A helical transmembrane segment spans residues 362–388 (FLLVLDYIGINMASLNSCINPIALYLV). Over 389 to 441 (SKRFKNCFKSCLCCWCQSFEEKQSLEEKQSCLKFKANDHGYDNFRSSNKYSSS) the chain is Cytoplasmic. S-palmitoyl cysteine attachment occurs at residues C402 and C404. Residues S418, S434, and S435 each carry the phosphoserine modification. Position 438 is a phosphotyrosine (Y438). A phosphoserine mark is found at S439, S440, and S441.

This sequence belongs to the G-protein coupled receptor 1 family. Endothelin receptor subfamily. EDNRB sub-subfamily. In terms of processing, it is not sure whether phosphorylation is on Ser-434 or Ser-435.

The protein resides in the cell membrane. Non-specific receptor for endothelin 1, 2, and 3. Mediates its action by association with G proteins that activate a phosphatidylinositol-calcium second messenger system. This Bos taurus (Bovine) protein is Endothelin receptor type B (EDNRB).